The primary structure comprises 483 residues: tRNA sulfurtransferase (483 aa).

A THUMP domain is found at 61–165 (AEVLEILTTT…DELLNQVIAR (105 aa)). Residues 183-184 (LI), lysine 265, glycine 287, and glutamine 296 each bind ATP. Cysteine 344 and cysteine 457 are joined by a disulfide. The Rhodanese domain maps to 405 to 483 (EEGNAVVLDI…GFNNVKVYRP (79 aa)). The active-site Cysteine persulfide intermediate is cysteine 457.

The protein belongs to the ThiI family.

The protein localises to the cytoplasm. The catalysed reaction is [ThiI sulfur-carrier protein]-S-sulfanyl-L-cysteine + a uridine in tRNA + 2 reduced [2Fe-2S]-[ferredoxin] + ATP + H(+) = [ThiI sulfur-carrier protein]-L-cysteine + a 4-thiouridine in tRNA + 2 oxidized [2Fe-2S]-[ferredoxin] + AMP + diphosphate. It carries out the reaction [ThiS sulfur-carrier protein]-C-terminal Gly-Gly-AMP + S-sulfanyl-L-cysteinyl-[cysteine desulfurase] + AH2 = [ThiS sulfur-carrier protein]-C-terminal-Gly-aminoethanethioate + L-cysteinyl-[cysteine desulfurase] + A + AMP + 2 H(+). Its pathway is cofactor biosynthesis; thiamine diphosphate biosynthesis. Its function is as follows. Catalyzes the ATP-dependent transfer of a sulfur to tRNA to produce 4-thiouridine in position 8 of tRNAs, which functions as a near-UV photosensor. Also catalyzes the transfer of sulfur to the sulfur carrier protein ThiS, forming ThiS-thiocarboxylate. This is a step in the synthesis of thiazole, in the thiamine biosynthesis pathway. The sulfur is donated as persulfide by IscS. This Vibrio cholerae serotype O1 (strain ATCC 39315 / El Tor Inaba N16961) protein is tRNA sulfurtransferase.